The primary structure comprises 463 residues: Serine carboxypeptidase-like 32 (463 aa).

The N-terminal stretch at Met-1–Ser-22 is a signal peptide. Cystine bridges form between Cys-86/Cys-345, Cys-249/Cys-262, and Cys-286/Cys-313. N-linked (GlcNAc...) asparagine glycosylation is present at Asn-137. Ser-179 is an active-site residue. Asn-201 and Asn-250 each carry an N-linked (GlcNAc...) asparagine glycan. N-linked (GlcNAc...) asparagine glycans are attached at residues Asn-341 and Asn-354. Catalysis depends on residues Asp-384 and His-436.

Belongs to the peptidase S10 family. In terms of tissue distribution, expressed in flowers.

The protein localises to the secreted. In terms of biological role, probable carboxypeptidase. In Arabidopsis thaliana (Mouse-ear cress), this protein is Serine carboxypeptidase-like 32 (SCPL32).